A 424-amino-acid chain; its full sequence is Histidine--tRNA ligase (424 aa).

It belongs to the class-II aminoacyl-tRNA synthetase family. Homodimer.

It is found in the cytoplasm. The enzyme catalyses tRNA(His) + L-histidine + ATP = L-histidyl-tRNA(His) + AMP + diphosphate + H(+). The protein is Histidine--tRNA ligase of Shewanella pealeana (strain ATCC 700345 / ANG-SQ1).